A 375-amino-acid chain; its full sequence is Putative prophage phiRv2 integrase (375 aa).

Positions 75-153 (APFGEYAEGW…LLRAIMQTAL (79 aa)) constitute a Core-binding (CB) domain. Residues 175–364 (HKIRPATLDE…AKGRDREIAA (190 aa)) enclose the Tyr recombinase domain. Active-site residues include Arg-209, His-316, Arg-319, and His-342. Catalysis depends on Tyr-351, which acts as the O-(3'-phospho-DNA)-tyrosine intermediate.

The protein belongs to the 'phage' integrase family.

In terms of biological role, integrase is necessary for integration of the phage into the host genome by site-specific recombination. In conjunction with excisionase, integrase is also necessary for excision of the prophage from the host genome. The chain is Putative prophage phiRv2 integrase from Mycobacterium tuberculosis (strain CDC 1551 / Oshkosh).